The primary structure comprises 371 residues: Cytochrome b (371 aa).

4 helical membrane passes run 25 to 45, 69 to 90, 105 to 125, and 170 to 190; these read FGSM…FLAI, WIMQ…YIHI, WLSG…GYVL, and FFAL…IHII. Positions 75 and 89 each coordinate heme b. Heme b is bound by residues His-174 and His-188. A ubiquinone is bound at residue His-193. 4 helical membrane-spanning segments follow: residues 218–238, 280–300, 312–332, and 339–358; these read YKDT…LSFS, LGGT…PFTH, LAQM…WTAS, and FIII…IMNP.

This sequence belongs to the cytochrome b family. In terms of assembly, the cytochrome bc1 complex contains 3 respiratory subunits (MT-CYB, CYC1 and UQCRFS1), 2 core proteins (UQCRC1 and UQCRC2) and probably 6 low-molecular weight proteins. The cofactor is heme b.

It localises to the mitochondrion inner membrane. Component of the ubiquinol-cytochrome c reductase complex (complex III or cytochrome b-c1 complex) that is part of the mitochondrial respiratory chain. The b-c1 complex mediates electron transfer from ubiquinol to cytochrome c. Contributes to the generation of a proton gradient across the mitochondrial membrane that is then used for ATP synthesis. The sequence is that of Cytochrome b (MT-CYB) from Sinomicrurus kelloggi (Kellogg's coral snake).